The following is a 222-amino-acid chain: Octanoyltransferase (222 aa).

The region spanning Glu35 to Lys210 is the BPL/LPL catalytic domain. Substrate contacts are provided by residues Arg74 to His81, Ser141 to Gly143, and Gly154 to Ala156. Cys172 (acyl-thioester intermediate) is an active-site residue.

The protein belongs to the LipB family.

The protein resides in the cytoplasm. It catalyses the reaction octanoyl-[ACP] + L-lysyl-[protein] = N(6)-octanoyl-L-lysyl-[protein] + holo-[ACP] + H(+). Its pathway is protein modification; protein lipoylation via endogenous pathway; protein N(6)-(lipoyl)lysine from octanoyl-[acyl-carrier-protein]: step 1/2. In terms of biological role, catalyzes the transfer of endogenously produced octanoic acid from octanoyl-acyl-carrier-protein onto the lipoyl domains of lipoate-dependent enzymes. Lipoyl-ACP can also act as a substrate although octanoyl-ACP is likely to be the physiological substrate. The sequence is that of Octanoyltransferase from Serratia proteamaculans (strain 568).